Reading from the N-terminus, the 282-residue chain is ATP phosphoribosyltransferase (282 aa).

The protein belongs to the ATP phosphoribosyltransferase family. Long subfamily. Mg(2+) is required as a cofactor.

It localises to the cytoplasm. The catalysed reaction is 1-(5-phospho-beta-D-ribosyl)-ATP + diphosphate = 5-phospho-alpha-D-ribose 1-diphosphate + ATP. The protein operates within amino-acid biosynthesis; L-histidine biosynthesis; L-histidine from 5-phospho-alpha-D-ribose 1-diphosphate: step 1/9. Feedback inhibited by histidine. Catalyzes the condensation of ATP and 5-phosphoribose 1-diphosphate to form N'-(5'-phosphoribosyl)-ATP (PR-ATP). Has a crucial role in the pathway because the rate of histidine biosynthesis seems to be controlled primarily by regulation of HisG enzymatic activity. In Halobacterium salinarum (strain ATCC 29341 / DSM 671 / R1), this protein is ATP phosphoribosyltransferase.